The chain runs to 398 residues: MVTMEELREMDCSVLKRLMNRDENGGGGSAGGNGSGSHGALGLLSGGKCLLLDCRPFLAHSAGYIRGSVNVRCNTIVRRRAKGSVSLEQILPAEEEVRARLRSGLYSAVIVYDERSPRAESLREDSTVSLVVQALRRNAERTDICLLKGGYERFSSEYPEFCSKTKALAAIPPPVPPSTNESLDLGCSSCGTPLHDQGGPVEILPFLYLGSAYHAARRDMLDALGITALLNVSSDCPNHFEGHYQYKCIPVEDNHKADISSWFMEAIEYIDAVKDCRGRVLVHCQAGISRSATICLAYLMMKKRVRLEEAFEFVKQRRSIISPNFSFMGQLLQFESQVLTTSCAAEAASPSGPLRERGKATPTPTSQFVFSFPVSVGVHAAPSNLPYLHSPITTSPSC.

Val-2 carries the N-acetylvaline modification. The Rhodanese domain occupies 45–163; the sequence is SGGKCLLLDC…FSSEYPEFCS (119 aa). The Tyrosine-protein phosphatase domain maps to 199–340; that stretch reads GPVEILPFLY…LLQFESQVLT (142 aa). The active-site Phosphocysteine intermediate is the Cys-284. Phosphoserine; by MAPK is present on residues Ser-390 and Ser-395.

The protein belongs to the protein-tyrosine phosphatase family. Non-receptor class dual specificity subfamily. As to quaternary structure, hollow spherical complex composed of 24 subunits with pseudooctahedral symmetry, has a tetramer as the basic unit. Phosphorylation in the C-terminus by ERK1/2 inhibits proteasomal degradation and stabilizes the protein.

Its subcellular location is the nucleus. It carries out the reaction O-phospho-L-tyrosyl-[protein] + H2O = L-tyrosyl-[protein] + phosphate. It catalyses the reaction O-phospho-L-seryl-[protein] + H2O = L-seryl-[protein] + phosphate. The catalysed reaction is O-phospho-L-threonyl-[protein] + H2O = L-threonyl-[protein] + phosphate. Its function is as follows. Regulates mitogenic signal transduction by dephosphorylating both Thr and Tyr residues on MAP kinases ERK1 and ERK2. The sequence is that of Dual specificity protein phosphatase 4 (Dusp4) from Mus musculus (Mouse).